Consider the following 335-residue polypeptide: MTWFTPEVIDVIISVVKAIVILLAVVVAGALLSFVERRLLGWWQDRYGPNRVGPFGMFQIAADMLKMFFKEDWTPPFADKVIFTLAPVVAMSALLIAFAVIPITPTWGVADLNIGLLFFFAMAGLSVYAVLFAGWSSNNKFALLGSLRASAQTVSYEVFMGLALMGIVVQVGSFNMRDIVEYQAQNLWFIIPQFFGFCTFFIAGVAVTHRHPFDQPEAEQELADGYHIEYAGMKWGMFFVGEYIGIILISALLVTLFFGGWHGPFGILPQLAFFWFFLKTAFFIMLFILLRASIPRPRYDQVMDFSWRFCLPLTLINLLVTAAVVLLNTPAAAVQ.

8 consecutive transmembrane segments (helical) span residues 11–31 (VIIS…AGAL), 81–101 (VIFT…FAVI), 114–134 (IGLL…LFAG), 154–174 (VSYE…VGSF), 187–207 (LWFI…GVAV), 238–258 (FFVG…TLFF), 270–290 (QLAF…FILL), and 309–329 (FCLP…LLNT).

This sequence belongs to the complex I subunit 1 family. As to quaternary structure, NDH-1 is composed of 13 different subunits. Subunits NuoA, H, J, K, L, M, N constitute the membrane sector of the complex.

It localises to the cell inner membrane. It carries out the reaction a quinone + NADH + 5 H(+)(in) = a quinol + NAD(+) + 4 H(+)(out). NDH-1 shuttles electrons from NADH, via FMN and iron-sulfur (Fe-S) centers, to quinones in the respiratory chain. The immediate electron acceptor for the enzyme in this species is believed to be ubiquinone. Couples the redox reaction to proton translocation (for every two electrons transferred, four hydrogen ions are translocated across the cytoplasmic membrane), and thus conserves the redox energy in a proton gradient. This subunit may bind ubiquinone. The protein is NADH-quinone oxidoreductase subunit H of Pseudomonas fluorescens (strain SBW25).